Consider the following 338-residue polypeptide: NADPH dehydrogenase (338 aa).

22 to 25 (SPMC) provides a ligand contact to FMN. Y27 lines the substrate pocket. A59 and Q101 together coordinate FMN. Substrate is bound at residue 163–166 (HAAH). FMN contacts are provided by residues R214 and 306–307 (GR).

This sequence belongs to the NADH:flavin oxidoreductase/NADH oxidase family. NamA subfamily. Homotetramer. The cofactor is FMN.

It catalyses the reaction A + NADPH + H(+) = AH2 + NADP(+). Functionally, catalyzes the reduction of the double bond of an array of alpha,beta-unsaturated aldehydes and ketones. It also reduces the nitro group of nitroester and nitroaromatic compounds. It could have a role in detoxification processes. This is NADPH dehydrogenase from Listeria welshimeri serovar 6b (strain ATCC 35897 / DSM 20650 / CCUG 15529 / CIP 8149 / NCTC 11857 / SLCC 5334 / V8).